An 81-amino-acid polypeptide reads, in one-letter code: Large ribosomal subunit protein bL31B (81 aa).

This sequence belongs to the bacterial ribosomal protein bL31 family. Type B subfamily. In terms of assembly, part of the 50S ribosomal subunit.

This chain is Large ribosomal subunit protein bL31B, found in Pediococcus pentosaceus (strain ATCC 25745 / CCUG 21536 / LMG 10740 / 183-1w).